The chain runs to 139 residues: D-ribose pyranase (139 aa).

His20 acts as the Proton donor in catalysis. Substrate-binding positions include Asp28, His106, and 128–130 (YAN).

The protein belongs to the RbsD / FucU family. RbsD subfamily. In terms of assembly, homodecamer.

Its subcellular location is the cytoplasm. The enzyme catalyses beta-D-ribopyranose = beta-D-ribofuranose. It participates in carbohydrate metabolism; D-ribose degradation; D-ribose 5-phosphate from beta-D-ribopyranose: step 1/2. Its function is as follows. Catalyzes the interconversion of beta-pyran and beta-furan forms of D-ribose. The polypeptide is D-ribose pyranase (Photobacterium profundum (strain SS9)).